Consider the following 401-residue polypeptide: Tryptophan synthase beta chain (401 aa).

Residue K91 is modified to N6-(pyridoxal phosphate)lysine.

Belongs to the TrpB family. As to quaternary structure, tetramer of two alpha and two beta chains. Pyridoxal 5'-phosphate is required as a cofactor.

The catalysed reaction is (1S,2R)-1-C-(indol-3-yl)glycerol 3-phosphate + L-serine = D-glyceraldehyde 3-phosphate + L-tryptophan + H2O. Its pathway is amino-acid biosynthesis; L-tryptophan biosynthesis; L-tryptophan from chorismate: step 5/5. In terms of biological role, the beta subunit is responsible for the synthesis of L-tryptophan from indole and L-serine. This is Tryptophan synthase beta chain from Lactococcus lactis subsp. cremoris (strain MG1363).